A 93-amino-acid polypeptide reads, in one-letter code: Large ribosomal subunit protein uL23cz/uL23cy (93 aa).

It belongs to the universal ribosomal protein uL23 family. In terms of assembly, part of the 50S ribosomal subunit.

Its subcellular location is the plastid. It localises to the chloroplast. In terms of biological role, binds to 23S rRNA. The chain is Large ribosomal subunit protein uL23cz/uL23cy (rpl23-A) from Jasminum nudiflorum (Winter jasmine).